We begin with the raw amino-acid sequence, 352 residues long: Glycerol-3-phosphate dehydrogenase [NAD(P)+] (352 aa).

Positions 11, 12, 32, and 105 each coordinate NADPH. Residues Lys-105, Gly-133, and Ser-135 each contribute to the sn-glycerol 3-phosphate site. Ala-137 is a binding site for NADPH. Positions 188, 241, 251, 252, and 253 each coordinate sn-glycerol 3-phosphate. Residue Lys-188 is the Proton acceptor of the active site. Arg-252 contacts NADPH. NADPH is bound by residues Val-276 and Glu-278.

The protein belongs to the NAD-dependent glycerol-3-phosphate dehydrogenase family.

The protein localises to the cytoplasm. It carries out the reaction sn-glycerol 3-phosphate + NAD(+) = dihydroxyacetone phosphate + NADH + H(+). It catalyses the reaction sn-glycerol 3-phosphate + NADP(+) = dihydroxyacetone phosphate + NADPH + H(+). It functions in the pathway membrane lipid metabolism; glycerophospholipid metabolism. In terms of biological role, catalyzes the reduction of the glycolytic intermediate dihydroxyacetone phosphate (DHAP) to sn-glycerol 3-phosphate (G3P), the key precursor for phospholipid synthesis. This chain is Glycerol-3-phosphate dehydrogenase [NAD(P)+], found in Desulfitobacterium hafniense (strain Y51).